A 180-amino-acid chain; its full sequence is Large ribosomal subunit protein uL5 (180 aa).

It belongs to the universal ribosomal protein uL5 family. As to quaternary structure, part of the 50S ribosomal subunit; part of the 5S rRNA/L5/L18/L25 subcomplex. Contacts the 5S rRNA and the P site tRNA. Forms a bridge to the 30S subunit in the 70S ribosome.

In terms of biological role, this is one of the proteins that bind and probably mediate the attachment of the 5S RNA into the large ribosomal subunit, where it forms part of the central protuberance. In the 70S ribosome it contacts protein S13 of the 30S subunit (bridge B1b), connecting the 2 subunits; this bridge is implicated in subunit movement. Contacts the P site tRNA; the 5S rRNA and some of its associated proteins might help stabilize positioning of ribosome-bound tRNAs. The protein is Large ribosomal subunit protein uL5 of Solibacter usitatus (strain Ellin6076).